The primary structure comprises 654 residues: Fructose-1,6-bisphosphatase class 3 (654 aa).

Residues N288–E307 form a disordered region. Residues D298–E307 show a composition bias toward basic and acidic residues.

The protein belongs to the FBPase class 3 family. Mn(2+) serves as cofactor.

The catalysed reaction is beta-D-fructose 1,6-bisphosphate + H2O = beta-D-fructose 6-phosphate + phosphate. It functions in the pathway carbohydrate biosynthesis; gluconeogenesis. The polypeptide is Fructose-1,6-bisphosphatase class 3 (Staphylococcus aureus (strain Mu3 / ATCC 700698)).